The chain runs to 400 residues: Argininosuccinate synthase (400 aa).

ATP contacts are provided by residues 10 to 18 (AYSGGVDTS) and Ala38. Tyr89 serves as a coordination point for L-citrulline. Residue Gly119 coordinates ATP. Thr121, Asn125, and Asp126 together coordinate L-aspartate. Asn125 serves as a coordination point for L-citrulline. Residues Arg129, Ser177, Ser186, Glu262, and Tyr274 each contribute to the L-citrulline site.

This sequence belongs to the argininosuccinate synthase family. Type 1 subfamily. As to quaternary structure, homotetramer.

The protein resides in the cytoplasm. The enzyme catalyses L-citrulline + L-aspartate + ATP = 2-(N(omega)-L-arginino)succinate + AMP + diphosphate + H(+). The protein operates within amino-acid biosynthesis; L-arginine biosynthesis; L-arginine from L-ornithine and carbamoyl phosphate: step 2/3. Its activity is regulated as follows. Activity decreases to 53.9% and 18.4% in the presence of 1 mM and 5 mM arginine, respectively. Activity also decreases to 80.1%, 78.1% and 92.1% in the presence of 5 mM ornithine, lysine and succinate, respectively. Activity does not decrease in the presence of glutamate, glutamine or asparagine. Catalyzes the condensation of citrulline and aspartate into argininosuccinate, the immediate precursor of arginine. SyArgG is the rate-limiting step in arginine biosynthesis in Synechocystis PCC 6803. This Synechocystis sp. (strain ATCC 27184 / PCC 6803 / Kazusa) protein is Argininosuccinate synthase.